We begin with the raw amino-acid sequence, 284 residues long: 4-diphosphocytidyl-2-C-methyl-D-erythritol kinase (284 aa).

Lys-9 is a catalytic residue. Pro-92–Ser-102 is an ATP binding site. The active site involves Asp-134.

Belongs to the GHMP kinase family. IspE subfamily.

It catalyses the reaction 4-CDP-2-C-methyl-D-erythritol + ATP = 4-CDP-2-C-methyl-D-erythritol 2-phosphate + ADP + H(+). It participates in isoprenoid biosynthesis; isopentenyl diphosphate biosynthesis via DXP pathway; isopentenyl diphosphate from 1-deoxy-D-xylulose 5-phosphate: step 3/6. Catalyzes the phosphorylation of the position 2 hydroxy group of 4-diphosphocytidyl-2C-methyl-D-erythritol. The chain is 4-diphosphocytidyl-2-C-methyl-D-erythritol kinase from Stutzerimonas stutzeri (strain A1501) (Pseudomonas stutzeri).